Reading from the N-terminus, the 419-residue chain is Odorant receptor 56a (419 aa).

Residues 1–41 (MFKVKDLLLSPTTFEDPIFGTHLRYFQWYGYVASKDQNRPL) are Cytoplasmic-facing. Residues 42-62 (LSLIRCTILTASIWLSCALML) traverse the membrane as a helical segment. The Extracellular portion of the chain corresponds to 63-76 (ARVFRGYENLNDGA). Residues 77–97 (TSYATAVQYFAVSIAMFNAYV) form a helical membrane-spanning segment. Residues 98–137 (QRDKVISLLRVAHSDIQNLMHEADNREMELLVATQAYTRT) lie on the Cytoplasmic side of the membrane. A helical transmembrane segment spans residues 138 to 158 (ITLLIWIPSVIAGLMAYSDCI). Residues 159–196 (YRSLFLPKSVFNVPAVRRGEEHPILLFQLFPFGELCDN) are Extracellular-facing. The chain crosses the membrane as a helical span at residues 197–217 (FVVGYLGPWYALGLGITAIPL). At 218–292 (WHTFITCLMK…FVQELQYLIC (75 aa)) the chain is on the cytoplasmic side. The helical transmembrane segment at 293–313 (VPVMADFIIFSVLICFLFFAL) threads the bilayer. The Extracellular segment spans residues 314–323 (TVGVPSKMDY). A helical transmembrane segment spans residues 324-344 (FFMFIYLFVMAGILWIYHWHA). At 345-389 (TLIVECHDELSLAYFSCGWYNFEMPLQKMLVFMMMHAQRPMKMRA) the chain is on the cytoplasmic side. The chain crosses the membrane as a helical span at residues 390 to 410 (LLVDLNLRTFIDIGRGAYSYF). The Extracellular segment spans residues 411-419 (NLLRSSHLY).

Belongs to the insect chemoreceptor superfamily. Heteromeric odorant receptor channel (TC 1.A.69) family. Or30a subfamily. In terms of assembly, interacts with Orco. Complexes exist early in the endomembrane system in olfactory sensory neurons (OSNs), coupling these complexes to the conserved ciliary trafficking pathway. In terms of tissue distribution, expressed in olfactory sensory neurons in the antenna.

It localises to the cell membrane. Functionally, odorant receptor which mediates acceptance or avoidance behavior, depending on its substrates. The odorant receptor repertoire encodes a large collection of odor stimuli that vary widely in identity, intensity, and duration. May form a complex with Orco to form odorant-sensing units, providing sensitive and prolonged odorant signaling and calcium permeability. Specific receptor for geosmin, a microbial odorant that constitutes an ecologically relevant stimulus that alerts flies to the presence of harmful microbes and induces avoidance behavior. This chain is Odorant receptor 56a (Or56a), found in Drosophila melanogaster (Fruit fly).